The sequence spans 107 residues: Thiosulfate sulfurtransferase GlpE (107 aa).

Positions Ala-17–Ser-105 constitute a Rhodanese domain. Residue Cys-65 is the Cysteine persulfide intermediate of the active site.

This sequence belongs to the GlpE family.

The protein localises to the cytoplasm. The enzyme catalyses thiosulfate + hydrogen cyanide = thiocyanate + sulfite + 2 H(+). It catalyses the reaction thiosulfate + [thioredoxin]-dithiol = [thioredoxin]-disulfide + hydrogen sulfide + sulfite + 2 H(+). Its function is as follows. Transferase that catalyzes the transfer of sulfur from thiosulfate to thiophilic acceptors such as cyanide or dithiols. May function in a CysM-independent thiosulfate assimilation pathway by catalyzing the conversion of thiosulfate to sulfite, which can then be used for L-cysteine biosynthesis. In Erwinia tasmaniensis (strain DSM 17950 / CFBP 7177 / CIP 109463 / NCPPB 4357 / Et1/99), this protein is Thiosulfate sulfurtransferase GlpE.